The following is a 144-amino-acid chain: Nucleoside diphosphate kinase (144 aa).

The ATP site is built by Lys-9, Phe-57, Arg-85, Thr-91, Arg-102, and Asn-112. His-115 acts as the Pros-phosphohistidine intermediate in catalysis.

This sequence belongs to the NDK family. As to quaternary structure, homotetramer. Requires Mg(2+) as cofactor.

The protein resides in the cytoplasm. The enzyme catalyses a 2'-deoxyribonucleoside 5'-diphosphate + ATP = a 2'-deoxyribonucleoside 5'-triphosphate + ADP. The catalysed reaction is a ribonucleoside 5'-diphosphate + ATP = a ribonucleoside 5'-triphosphate + ADP. Major role in the synthesis of nucleoside triphosphates other than ATP. The ATP gamma phosphate is transferred to the NDP beta phosphate via a ping-pong mechanism, using a phosphorylated active-site intermediate. In Chlamydia pneumoniae (Chlamydophila pneumoniae), this protein is Nucleoside diphosphate kinase.